The primary structure comprises 434 residues: Trigger factor (434 aa).

The 86-residue stretch at G163–P248 folds into the PPIase FKBP-type domain.

It belongs to the FKBP-type PPIase family. Tig subfamily.

The protein localises to the cytoplasm. The enzyme catalyses [protein]-peptidylproline (omega=180) = [protein]-peptidylproline (omega=0). Its function is as follows. Involved in protein export. Acts as a chaperone by maintaining the newly synthesized protein in an open conformation. Functions as a peptidyl-prolyl cis-trans isomerase. This chain is Trigger factor, found in Methylibium petroleiphilum (strain ATCC BAA-1232 / LMG 22953 / PM1).